A 336-amino-acid polypeptide reads, in one-letter code: Electron transfer flavoprotein subunit alpha (336 aa).

Position 275-303 (275-303 (LYIACGISGAIQHLAGMQDSDYIIAINKD)) interacts with FAD.

This sequence belongs to the ETF alpha-subunit/FixB family. In terms of assembly, heterodimer of an alpha and a beta subunit. Requires FAD as cofactor.

In terms of biological role, the electron transfer flavoprotein serves as a specific electron acceptor for other dehydrogenases. It transfers the electrons to the main respiratory chain via ETF-ubiquinone oxidoreductase (ETF dehydrogenase). The chain is Electron transfer flavoprotein subunit alpha (etfA) from Clostridium acetobutylicum (strain ATCC 824 / DSM 792 / JCM 1419 / IAM 19013 / LMG 5710 / NBRC 13948 / NRRL B-527 / VKM B-1787 / 2291 / W).